Consider the following 58-residue polypeptide: Ribulose bisphosphate carboxylase large chain (58 aa).

Positions 1–2 (MS) are excised as a propeptide. Pro-3 carries the post-translational modification N-acetylproline. At Lys-14 the chain carries N6,N6,N6-trimethyllysine.

The protein belongs to the RuBisCO large chain family. Type I subfamily. As to quaternary structure, heterohexadecamer of 8 large chains and 8 small chains.

The protein localises to the plastid. The protein resides in the chloroplast. The enzyme catalyses 2 (2R)-3-phosphoglycerate + 2 H(+) = D-ribulose 1,5-bisphosphate + CO2 + H2O. It catalyses the reaction D-ribulose 1,5-bisphosphate + O2 = 2-phosphoglycolate + (2R)-3-phosphoglycerate + 2 H(+). RuBisCO catalyzes two reactions: the carboxylation of D-ribulose 1,5-bisphosphate, the primary event in carbon dioxide fixation, as well as the oxidative fragmentation of the pentose substrate in the photorespiration process. Both reactions occur simultaneously and in competition at the same active site. The chain is Ribulose bisphosphate carboxylase large chain (rbcL) from Euonymus maackii (Maack's spindle tree).